The sequence spans 397 residues: Corticosteroid-binding globulin (397 aa).

The N-terminal stretch at 1-22 (MSLALYTCLFWLCTSGLWTTQA) is a signal peptide. N-linked (GlcNAc...) asparagine glycans are attached at residues asparagine 89, asparagine 169, asparagine 217, and asparagine 232. Glutamine 247 is a binding site for cortisol. N-linked (GlcNAc...) asparagine glycosylation is present at asparagine 253. Residue aspartate 279 participates in cortisol binding. Asparagine 320 carries N-linked (GlcNAc...) asparagine glycosylation. Tryptophan 385 contributes to the cortisol binding site.

The protein belongs to the serpin family. As to expression, expressed by the liver; secreted in plasma.

Its subcellular location is the secreted. In terms of biological role, major transport protein for glucocorticoids and progestins in the blood of almost all vertebrate species. In Mus musculus (Mouse), this protein is Corticosteroid-binding globulin (Serpina6).